The sequence spans 412 residues: O-acetyl-L-homoserine sulfhydrylase 2 (412 aa).

Lysine 202 bears the N6-(pyridoxal phosphate)lysine mark.

The protein belongs to the trans-sulfuration enzymes family. In terms of assembly, homotetramer. Pyridoxal 5'-phosphate is required as a cofactor.

The enzyme catalyses O-acetyl-L-homoserine + hydrogen sulfide = L-homocysteine + acetate. With respect to regulation, inhibited by the carbonyl reagents hydroxylamine and phenylhydrazine. Also inhibited by methionine and propargylglycine. Its function is as follows. Catalyzes the conversion of O-acetyl-L-homoserine (OAH) into homocysteine in the methionine biosynthesis pathway. Has weak activity with O-acetyl-L-serine, O-phospho-L-serine, L-serine, O-succinyl-L-homoserine and L-homoserine. Shows a very low CTT gamma-synthase activity. The protein is O-acetyl-L-homoserine sulfhydrylase 2 of Thermus thermophilus (strain ATCC 27634 / DSM 579 / HB8).